The primary structure comprises 490 residues: Aspartyl/glutamyl-tRNA(Asn/Gln) amidotransferase subunit B (490 aa).

Belongs to the GatB/GatE family. GatB subfamily. In terms of assembly, heterotrimer of A, B and C subunits.

The enzyme catalyses L-glutamyl-tRNA(Gln) + L-glutamine + ATP + H2O = L-glutaminyl-tRNA(Gln) + L-glutamate + ADP + phosphate + H(+). It catalyses the reaction L-aspartyl-tRNA(Asn) + L-glutamine + ATP + H2O = L-asparaginyl-tRNA(Asn) + L-glutamate + ADP + phosphate + 2 H(+). Functionally, allows the formation of correctly charged Asn-tRNA(Asn) or Gln-tRNA(Gln) through the transamidation of misacylated Asp-tRNA(Asn) or Glu-tRNA(Gln) in organisms which lack either or both of asparaginyl-tRNA or glutaminyl-tRNA synthetases. The reaction takes place in the presence of glutamine and ATP through an activated phospho-Asp-tRNA(Asn) or phospho-Glu-tRNA(Gln). The sequence is that of Aspartyl/glutamyl-tRNA(Asn/Gln) amidotransferase subunit B from Prochlorococcus marinus (strain AS9601).